Here is a 353-residue protein sequence, read N- to C-terminus: Photosystem II D2 protein (353 aa).

T2 is modified (N-acetylthreonine). A Phosphothreonine modification is found at T2. The chain crosses the membrane as a helical span at residues 41–61 (TAYFALGGWFTGTTFVTSWYT). H118 is a chlorophyll a binding site. Residues 125–141 (GFMLRQFELARSVQLRP) traverse the membrane as a helical segment. Residues Q130 and N143 each coordinate pheophytin a. The chain crosses the membrane as a helical span at residues 153-166 (VFVSVFLIYPLGQS). Chlorophyll a is bound at residue H198. Residues 208–228 (AALLCAIHGATVENTLFEDGD) form a helical membrane-spanning segment. H215 and F262 together coordinate a plastoquinone. A Fe cation-binding site is contributed by H215. H269 lines the Fe cation pocket. Residues 279-295 (GLWMSAIGVVGLALNLR) form a helical membrane-spanning segment.

Belongs to the reaction center PufL/M/PsbA/D family. PSII is composed of 1 copy each of membrane proteins PsbA, PsbB, PsbC, PsbD, PsbE, PsbF, PsbH, PsbI, PsbJ, PsbK, PsbL, PsbM, PsbT, PsbX, PsbY, PsbZ, Psb30/Ycf12, at least 3 peripheral proteins of the oxygen-evolving complex and a large number of cofactors. It forms dimeric complexes. The cofactor is The D1/D2 heterodimer binds P680, chlorophylls that are the primary electron donor of PSII, and subsequent electron acceptors. It shares a non-heme iron and each subunit binds pheophytin, quinone, additional chlorophylls, carotenoids and lipids. There is also a Cl(-1) ion associated with D1 and D2, which is required for oxygen evolution. The PSII complex binds additional chlorophylls, carotenoids and specific lipids..

The protein localises to the plastid. The protein resides in the chloroplast thylakoid membrane. The catalysed reaction is 2 a plastoquinone + 4 hnu + 2 H2O = 2 a plastoquinol + O2. Functionally, photosystem II (PSII) is a light-driven water:plastoquinone oxidoreductase that uses light energy to abstract electrons from H(2)O, generating O(2) and a proton gradient subsequently used for ATP formation. It consists of a core antenna complex that captures photons, and an electron transfer chain that converts photonic excitation into a charge separation. The D1/D2 (PsbA/PsbD) reaction center heterodimer binds P680, the primary electron donor of PSII as well as several subsequent electron acceptors. D2 is needed for assembly of a stable PSII complex. In Adiantum capillus-veneris (Maidenhair fern), this protein is Photosystem II D2 protein.